A 110-amino-acid polypeptide reads, in one-letter code: U1-lycotoxin-Ls1ii (110 aa).

An N-terminal signal peptide occupies residues 1–20; that stretch reads MKFVLLFGVLLVTLFSYSSA. Residues 21 to 44 constitute a propeptide that is removed on maturation; it reads EMLDDFDQADEDELLSLIEKEEAR. 4 disulfide bridges follow: C47-C62, C54-C71, C61-C89, and C73-C87.

It belongs to the neurotoxin 19 (CSTX) family. 03 subfamily. Expressed by the venom gland.

The protein resides in the secreted. The polypeptide is U1-lycotoxin-Ls1ii (Lycosa singoriensis (Wolf spider)).